The primary structure comprises 318 residues: Aspartate carbamoyltransferase catalytic subunit (318 aa).

Carbamoyl phosphate-binding residues include Arg-54 and Thr-55. Lys-82 contacts L-aspartate. Carbamoyl phosphate contacts are provided by Arg-104, His-134, and Gln-137. L-aspartate is bound by residues Arg-174 and Arg-230. Carbamoyl phosphate is bound by residues Gly-271 and Pro-272.

It belongs to the aspartate/ornithine carbamoyltransferase superfamily. ATCase family. In terms of assembly, heterododecamer (2C3:3R2) of six catalytic PyrB chains organized as two trimers (C3), and six regulatory PyrI chains organized as three dimers (R2).

It carries out the reaction carbamoyl phosphate + L-aspartate = N-carbamoyl-L-aspartate + phosphate + H(+). It participates in pyrimidine metabolism; UMP biosynthesis via de novo pathway; (S)-dihydroorotate from bicarbonate: step 2/3. Functionally, catalyzes the condensation of carbamoyl phosphate and aspartate to form carbamoyl aspartate and inorganic phosphate, the committed step in the de novo pyrimidine nucleotide biosynthesis pathway. The sequence is that of Aspartate carbamoyltransferase catalytic subunit from Clavibacter sepedonicus (Clavibacter michiganensis subsp. sepedonicus).